Here is a 284-residue protein sequence, read N- to C-terminus: Lipoyl synthase (284 aa).

The [4Fe-4S] cluster site is built by Cys36, Cys41, Cys47, Cys62, Cys66, Cys69, and Ser273. One can recognise a Radical SAM core domain in the interval 48–262 (WGKGTATFMI…RTIGLKKGFR (215 aa)).

This sequence belongs to the radical SAM superfamily. Lipoyl synthase family. [4Fe-4S] cluster is required as a cofactor.

Its subcellular location is the cytoplasm. It carries out the reaction [[Fe-S] cluster scaffold protein carrying a second [4Fe-4S](2+) cluster] + N(6)-octanoyl-L-lysyl-[protein] + 2 oxidized [2Fe-2S]-[ferredoxin] + 2 S-adenosyl-L-methionine + 4 H(+) = [[Fe-S] cluster scaffold protein] + N(6)-[(R)-dihydrolipoyl]-L-lysyl-[protein] + 4 Fe(3+) + 2 hydrogen sulfide + 2 5'-deoxyadenosine + 2 L-methionine + 2 reduced [2Fe-2S]-[ferredoxin]. The protein operates within protein modification; protein lipoylation via endogenous pathway; protein N(6)-(lipoyl)lysine from octanoyl-[acyl-carrier-protein]: step 2/2. Functionally, catalyzes the radical-mediated insertion of two sulfur atoms into the C-6 and C-8 positions of the octanoyl moiety bound to the lipoyl domains of lipoate-dependent enzymes, thereby converting the octanoylated domains into lipoylated derivatives. This Phocaeicola vulgatus (strain ATCC 8482 / DSM 1447 / JCM 5826 / CCUG 4940 / NBRC 14291 / NCTC 11154) (Bacteroides vulgatus) protein is Lipoyl synthase.